The sequence spans 131 residues: Small ribosomal subunit protein uS8 (131 aa).

This sequence belongs to the universal ribosomal protein uS8 family. Part of the 30S ribosomal subunit. Contacts proteins S5 and S12.

Its function is as follows. One of the primary rRNA binding proteins, it binds directly to 16S rRNA central domain where it helps coordinate assembly of the platform of the 30S subunit. The protein is Small ribosomal subunit protein uS8 of Parabacteroides distasonis (strain ATCC 8503 / DSM 20701 / CIP 104284 / JCM 5825 / NCTC 11152).